A 538-amino-acid polypeptide reads, in one-letter code: Putative outer membrane porin BglH (538 aa).

Positions 1-25 (MFRRNLITSAILLMAPLAFSAQSLA) are cleaved as a signal peptide. Positions 52-82 (KDEEKKKYTPATVNRSVSTNDQGYAANPFPT) are disordered. The segment covering 62–73 (ATVNRSVSTNDQ) has biased composition (polar residues).

It belongs to the porin LamB (TC 1.B.3) family.

It is found in the cell outer membrane. In terms of biological role, may be a sugar porin with a broad carbohydrate specificity. This is Putative outer membrane porin BglH (bglH) from Shigella sonnei (strain Ss046).